A 754-amino-acid chain; its full sequence is Phosphatidylinositol 4-phosphate 5-kinase 7 (754 aa).

8 MORN repeats span residues 16–38 (YSGE…DGTI), 39–61 (YEGD…SGAK), 62–84 (YEGD…DESV), 85–107 (YSGA…NSDL), 108–130 (YDGL…NGNR), 131–153 (YIGN…NGDL), 154–176 (YDGF…DGCL), and 177–198 (YYGT…AGTK). Residues 329 to 750 (GEHNYYLMLN…RFVNFLHKVF (422 aa)) enclose the PIPK domain. The tract at residues 710-731 (YNTKKKVEHTCKSLQYDPMTIS) is activation loop.

The catalysed reaction is a 1,2-diacyl-sn-glycero-3-phospho-(1D-myo-inositol 4-phosphate) + ATP = a 1,2-diacyl-sn-glycero-3-phospho-(1D-myo-inositol-4,5-bisphosphate) + ADP + H(+). This Arabidopsis thaliana (Mouse-ear cress) protein is Phosphatidylinositol 4-phosphate 5-kinase 7 (PIP5K7).